The primary structure comprises 273 residues: 2-dehydro-3-deoxyphosphooctonate aldolase (273 aa).

This sequence belongs to the KdsA family.

The protein localises to the cytoplasm. The enzyme catalyses D-arabinose 5-phosphate + phosphoenolpyruvate + H2O = 3-deoxy-alpha-D-manno-2-octulosonate-8-phosphate + phosphate. The protein operates within carbohydrate biosynthesis; 3-deoxy-D-manno-octulosonate biosynthesis; 3-deoxy-D-manno-octulosonate from D-ribulose 5-phosphate: step 2/3. Its pathway is bacterial outer membrane biogenesis; lipopolysaccharide biosynthesis. The polypeptide is 2-dehydro-3-deoxyphosphooctonate aldolase (Cyanothece sp. (strain PCC 7425 / ATCC 29141)).